The sequence spans 530 residues: MSQWLAFATQLVGVRKSHQLALQFVDLLTQGLDLSDSLLLLPSSDGRLLVPHDPQRQFAWSVTDFDVPFAHVLQSSNAMHLTAEELVFWQSNRTFSQLTSRVGMFDSVWIQPLPMDTRQVHSILLLMGESHGIVSAFENADFLKFIEVFSQQWSLLNDMEREEQRRLELKQSLTDIERDSAQRSLANALSRTLIGESAAMQKLREQIVSAANSQLSVMVQGETGTGKELVAAAVHELSSRKSAPFVAINCAAIPEHLLESELFGYCKGAFSGADSDKQGLIAQANGGTLFLDEIGDMPLTLQAKLLRVLESRTFRPLGGKQELSSDFRLVSATHVNLLDQVRKKEFRQDLYYRLFQYPITLPRLAARLEDIELLSEHFVRVFNLQHNTRIRGLNYRAIDCLKQYDFPGNVRELKHLIEFGCAQTADGTQVEASCFAHRLQTLPCLAPEATPVAVSVETENVDLEPSVALAGEPNFAVIHDLKQAVSQFEALIISERLNRFAGDRAKAAKSLGIPKRTLAYKCLKLEIKTP.

Positions 193 to 422 (LIGESAAMQK…LKHLIEFGCA (230 aa)) constitute a Sigma-54 factor interaction domain. ATP-binding positions include 221–228 (GETGTGKE) and 284–293 (ANGGTLFLDE).

Transcriptional regulator of the type VI secretion system. In Vibrio cholerae serotype O1 (strain ATCC 39315 / El Tor Inaba N16961), this protein is Transcriptional regulator VasH.